The following is a 295-amino-acid chain: Ribosomal RNA small subunit methyltransferase H (295 aa).

Residues 36 to 38 (GGH), Asp56, Leu90, Asp104, and His111 each bind S-adenosyl-L-methionine.

It belongs to the methyltransferase superfamily. RsmH family.

The protein resides in the cytoplasm. The catalysed reaction is cytidine(1402) in 16S rRNA + S-adenosyl-L-methionine = N(4)-methylcytidine(1402) in 16S rRNA + S-adenosyl-L-homocysteine + H(+). Specifically methylates the N4 position of cytidine in position 1402 (C1402) of 16S rRNA. In Dictyoglomus turgidum (strain DSM 6724 / Z-1310), this protein is Ribosomal RNA small subunit methyltransferase H.